The sequence spans 190 residues: Elongation factor P 1 (190 aa).

This sequence belongs to the elongation factor P family.

The protein resides in the cytoplasm. It functions in the pathway protein biosynthesis; polypeptide chain elongation. Involved in peptide bond synthesis. Stimulates efficient translation and peptide-bond synthesis on native or reconstituted 70S ribosomes in vitro. Probably functions indirectly by altering the affinity of the ribosome for aminoacyl-tRNA, thus increasing their reactivity as acceptors for peptidyl transferase. The sequence is that of Elongation factor P 1 (efp1) from Lactobacillus johnsonii (strain CNCM I-12250 / La1 / NCC 533).